A 317-amino-acid polypeptide reads, in one-letter code: Acetyl-coenzyme A carboxylase carboxyl transferase subunit alpha (317 aa).

Residues 37–292 form the CoA carboxyltransferase C-terminal domain; it reads EINKKLEQTK…ADYITKGYNE (256 aa).

It belongs to the AccA family. Acetyl-CoA carboxylase is a heterohexamer composed of biotin carboxyl carrier protein (AccB), biotin carboxylase (AccC) and two subunits each of ACCase subunit alpha (AccA) and ACCase subunit beta (AccD).

It is found in the cytoplasm. It carries out the reaction N(6)-carboxybiotinyl-L-lysyl-[protein] + acetyl-CoA = N(6)-biotinyl-L-lysyl-[protein] + malonyl-CoA. It participates in lipid metabolism; malonyl-CoA biosynthesis; malonyl-CoA from acetyl-CoA: step 1/1. Functionally, component of the acetyl coenzyme A carboxylase (ACC) complex. First, biotin carboxylase catalyzes the carboxylation of biotin on its carrier protein (BCCP) and then the CO(2) group is transferred by the carboxyltransferase to acetyl-CoA to form malonyl-CoA. The sequence is that of Acetyl-coenzyme A carboxylase carboxyl transferase subunit alpha from Flavobacterium johnsoniae (strain ATCC 17061 / DSM 2064 / JCM 8514 / BCRC 14874 / CCUG 350202 / NBRC 14942 / NCIMB 11054 / UW101) (Cytophaga johnsonae).